The chain runs to 499 residues: AVGPVADNTITDAATSPDGFSRQAVVVNGVTPGPLVAGNIGDRFQLNVIDNLTNHTMLKTTSVHWHGFFQQGTNWADGPAFINQCPISPGHSFLYDFQVPNQAGTFWYHSHLSTQYCDGLRGPFVVYDPNDPHASRYDVDNDDTVITLADWYHTAAKLGPRFPAGADATLINGKGRAPSDTSAELSVIKVTKGKRYRFRLVSLSCDPNFTFSIDGHNLTIIEVDSSNSQPLSVDSIQIFAAQRYSFVLNANQAVDNYWIRANPNFGNVGFNGGINSAILRYDGAPAVEPTTNQTTSVKPLNEVNLHPLVSTPVPGSPSSGGVDKAINMAFNFNGSNFFINGASFVPPSVPVLLQILSGAQTAQDLLPSGSVYVLPSNASIEISFPATAAAPGAPHPFHLHGHTFAVVRSAGSTVYNYSNPIFRDVVSTGTPAAGDNVTIRFLTNNPGPWFLHCHIDFHLEGGFAVVQAEDVPDVKATNPVPQAWSDLCPTYDANAPSDQ.

2 consecutive Plastocyanin-like domains span residues 2-127 and 139-281; these read VGPV…FVVY and VDND…ILRY. N-linked (GlcNAc...) asparagine glycosylation is found at asparagine 51 and asparagine 54. Cu cation is bound by residues histidine 64, histidine 66, histidine 109, and histidine 111. Intrachain disulfides connect cysteine 85–cysteine 488 and cysteine 117–cysteine 205. Tyrosine 196 is subject to 3'-nitrotyrosine. Asparagine 208, asparagine 217, asparagine 292, and asparagine 333 each carry an N-linked (GlcNAc...) asparagine glycan. A Plastocyanin-like 3 domain is found at 348–470; it reads SVPVLLQILS…GGFAVVQAED (123 aa). 3'-nitrotyrosine is present on tyrosine 372. Asparagine 377 carries an N-linked (GlcNAc...) asparagine glycan. Cu cation contacts are provided by histidine 395, histidine 398, and histidine 400. N-linked (GlcNAc...) asparagine glycosylation is found at asparagine 416 and asparagine 436. Cu cation contacts are provided by histidine 452, cysteine 453, histidine 454, and histidine 458.

It belongs to the multicopper oxidase family. Cu cation is required as a cofactor.

The protein localises to the secreted. It carries out the reaction 4 hydroquinone + O2 = 4 benzosemiquinone + 2 H2O. Functionally, lignin degradation and detoxification of lignin-derived products. The polypeptide is Laccase (Trametes maxima (White-rot fungus)).